A 232-amino-acid polypeptide reads, in one-letter code: MIRLGVNIDHVATLRNARGGTFPDPVAAAELAIASGADGITAHLREDRRHIRDADMPRLRALSAPLNFEMAATDEMVRIACDLRPHACCLVPEKRQEVTTEGGLDIVGQSEALKPKIARLRDAGIRVSLFIDPEARQIETAAALGAPVVELHTGAYALGGSEELERLRSAAGTVAACGLELHAGHGLTYDNVGAIADLTGLAELNIGHFLIGQAIFDGLGPVVRKMKSLINS.

Asn7 is a 3-amino-2-oxopropyl phosphate binding site. 9 to 10 is a 1-deoxy-D-xylulose 5-phosphate binding site; the sequence is DH. Residue Arg18 participates in 3-amino-2-oxopropyl phosphate binding. The active-site Proton acceptor is the His43. 1-deoxy-D-xylulose 5-phosphate is bound by residues Arg45 and His50. Glu69 acts as the Proton acceptor in catalysis. Position 99 (Thr99) interacts with 1-deoxy-D-xylulose 5-phosphate. The Proton donor role is filled by His185. 3-amino-2-oxopropyl phosphate-binding positions include Gly186 and 207–208; that span reads GH.

Belongs to the PNP synthase family. As to quaternary structure, homooctamer; tetramer of dimers.

It is found in the cytoplasm. The enzyme catalyses 3-amino-2-oxopropyl phosphate + 1-deoxy-D-xylulose 5-phosphate = pyridoxine 5'-phosphate + phosphate + 2 H2O + H(+). Its pathway is cofactor biosynthesis; pyridoxine 5'-phosphate biosynthesis; pyridoxine 5'-phosphate from D-erythrose 4-phosphate: step 5/5. Functionally, catalyzes the complicated ring closure reaction between the two acyclic compounds 1-deoxy-D-xylulose-5-phosphate (DXP) and 3-amino-2-oxopropyl phosphate (1-amino-acetone-3-phosphate or AAP) to form pyridoxine 5'-phosphate (PNP) and inorganic phosphate. In Gluconobacter oxydans (strain 621H) (Gluconobacter suboxydans), this protein is Pyridoxine 5'-phosphate synthase.